Consider the following 255-residue polypeptide: Placenta-expressed transcript 1 protein (255 aa).

Residues Met-1 to Ser-26 form the signal peptide. N-linked (GlcNAc...) asparagine glycans are attached at residues Asn-57, Asn-67, and Asn-126. Ser-236 carries the GPI-anchor amidated serine lipid modification. Positions Pro-237–Phe-255 are cleaved as a propeptide — removed in mature form.

In terms of processing, N-glycosylated. Post-translationally, GPI-anchored.

It is found in the apical cell membrane. Its function is as follows. Modulates leading keratinocyte migration and cellular adhesion to matrix proteins during a wound-healing response and promotes wound repair. May play a role during trichilemmal differentiation of the hair follicle. The sequence is that of Placenta-expressed transcript 1 protein (Plet1) from Rattus norvegicus (Rat).